A 504-amino-acid chain; its full sequence is Aspartyl/glutamyl-tRNA(Asn/Gln) amidotransferase subunit B (504 aa).

This sequence belongs to the GatB/GatE family. GatB subfamily. Heterotrimer of A, B and C subunits.

It catalyses the reaction L-glutamyl-tRNA(Gln) + L-glutamine + ATP + H2O = L-glutaminyl-tRNA(Gln) + L-glutamate + ADP + phosphate + H(+). It carries out the reaction L-aspartyl-tRNA(Asn) + L-glutamine + ATP + H2O = L-asparaginyl-tRNA(Asn) + L-glutamate + ADP + phosphate + 2 H(+). Functionally, allows the formation of correctly charged Asn-tRNA(Asn) or Gln-tRNA(Gln) through the transamidation of misacylated Asp-tRNA(Asn) or Glu-tRNA(Gln) in organisms which lack either or both of asparaginyl-tRNA or glutaminyl-tRNA synthetases. The reaction takes place in the presence of glutamine and ATP through an activated phospho-Asp-tRNA(Asn) or phospho-Glu-tRNA(Gln). The sequence is that of Aspartyl/glutamyl-tRNA(Asn/Gln) amidotransferase subunit B from Rhodococcus opacus (strain B4).